The following is a 163-amino-acid chain: Cell division protein SepF (163 aa).

The disordered stretch occupies residues 25 to 53; sequence SVAPHSGEERESAFSRRSAERAERTERPT. Residues 30-51 are compositionally biased toward basic and acidic residues; the sequence is SGEERESAFSRRSAERAERTER.

It belongs to the SepF family. In terms of assembly, homodimer. Interacts with FtsZ.

The protein localises to the cytoplasm. In terms of biological role, cell division protein that is part of the divisome complex and is recruited early to the Z-ring. Probably stimulates Z-ring formation, perhaps through the cross-linking of FtsZ protofilaments. Its function overlaps with FtsA. This is Cell division protein SepF from Heliobacterium modesticaldum (strain ATCC 51547 / Ice1).